An 852-amino-acid chain; its full sequence is MNMSKQGIFQTVGSGLDHILSLADIEEEQMIQSVVRTAVTGASYFTSVDQSSVHTAEVGLHQIEPLKTSVDKPSSKKTQGEKFFLIHSADWLTTHALFHEVAKLDVVKLLYNEQFAVQGLLRYHTYARFGIEIQVQINPTPFQQGGLICAMVPSDQSYGSIASLTVYPHGLLNCNINNVVRIKVPFIYTRGAYHFKDPQYPVWELTIRVWSELNIGTGTSAYTSLNVLARFTDLELHGLTPLSTQMMRNEFRVSTTENVVNLSNYEDARAKMSFALDQEDWKSDPSQGGGIKITHFTTWTSIPTLAAQFPFNASDSVGQQIKVIPVDPYFFQMTNTNPDQKCITALASICQMFCFWRGDLVFDFQVFPTKYHSGRLLFCFVPGNELIDVTGITLKQATTAPCAVMDITGVQSTLRFRVPWISDTPYRVNRYTKSAHQKGEYTAIGKLIVYCYNRLTSPSNVASHVRVNVYLSAINLECFAPLYHAMDVTTQVGDDSGGFSTTVSTEQNVPDPQVGITTMKDLKGKANRGKMDVSGVQAPVGAITTIEDPALAKKVPETFPELKPGESRHTSDHMSIYKFMGRSHFLCTFTFNSNNKEYTFPITLSSTSNPPHGLPSTLRWFFNLFQLYRGPLDLTIIITGATDVDGMAWFTPVGLAVDTPWVEKESALSIDYKTALGAVRFNTRRTGNIQIRLPWYSYLYAVSGALDGLGDKTDSTFGLVSIQIANYNHSDEYLSFSCYLSVTQQSEFYFPRAPLNSNAMLSTESMMSRIAAGDLESSVDDPRSEEDRRFESHIECRKPYKELRLEVGKQRLKYAQEELSNEVLPPPRKMKGLFSQAKISLFYTEEHEIMKF.

2 consecutive short sequence motifs ((L)YPX(n)L motif) follow at residues Y167 to L171 and Y200 to L205. The involved in P1-2A pentamerization stretch occupies residues M766 to Q836.

Belongs to the picornaviridae polyprotein family. As to quaternary structure, homodimer. Homomultimer; probably interacts with membranes in a multimeric form. Seems to assemble into amyloid-like fibers. In terms of assembly, homopentamer. Homooligomer. Interacts with capsid protein VP2. Interacts with capsid protein VP3. As to quaternary structure, interacts with capsid protein VP1. Interacts with capsid protein VP3. In terms of assembly, interacts with capsid protein VP1. Interacts with capsid protein VP2. Post-translationally, specific enzymatic cleavages by viral protease in vivo yield a variety of precursors and mature proteins. Polyprotein processing intermediates are produced, such as P1-2A which is a functional precursor of the structural proteins, VP0 which is a VP4-VP2 precursor, VP1-2A precursor, 3ABC precursor which is a stable and catalytically active precursor of 3A, 3B and 3C proteins, 3AB and 3CD precursors. The assembly signal 2A is removed from VP1-2A by a host protease, possibly host Cathepsin L. This cleavage occurs over a region of 3 amino-acids probably generating VP1 proteins with heterogeneous C-termini. During virion maturation, immature virions are rendered infectious following cleavage of VP0 into VP4 and VP2. This maturation seems to be an autocatalytic event triggered by the presence of RNA in the capsid and is followed by a conformational change of the particle. In terms of processing, the assembly signal 2A is removed from VP1-2A by a host protease, possibly host Cathepsin L in naked virions. This cleavage does not occur in enveloped virions. This cleavage occurs over a region of 3 amino-acids probably generating VP1 proteins with heterogeneous C-termini. Post-translationally, viral protein genome-linked: VPg is uridylylated prior to priming replication into VPg-pUpU. Unlike other picornaviruses, does not seem to be myristoylated.

It is found in the virion. It localises to the host endosome. The protein resides in the host multivesicular body. The protein localises to the host membrane. Capsid proteins VP1, VP2, and VP3 form a closed capsid enclosing the viral positive strand RNA genome. All these proteins contain a beta-sheet structure called beta-barrel jelly roll. Together they form an icosahedral capsid (T=3) composed of 60 copies of each VP1, VP2, and VP3, with a diameter of approximately 300 Angstroms. VP1 is situated at the 12 fivefold axes, whereas VP2 and VP3 are located at the quasi-sixfold axes. The naked capsid interacts with the host receptor HAVCR1 to provide virion attachment to and probably entry into the target cell. Functionally, VP0 precursor is a component of the immature procapsids. In terms of biological role, plays a role in the assembly of the 12 pentamers into an icosahedral structure. Has not been detected in mature virions, supposedly owing to its small size. Its function is as follows. Precursor component of immature procapsids that corresponds to an extended form of the structural protein VP1. After maturation, possibly by the host Cathepsin L, the assembly signal 2A is cleaved to give rise to the mature VP1 protein. Affects membrane integrity and causes an increase in membrane permeability. Functionally, functions as a viroporin. Affects membrane integrity and causes an increase in membrane permeability. Involved in host intracellular membrane rearrangements probably to give rise to the viral factories. Does not disrupt calcium homeostasis or glycoprotein trafficking. Antagonizes the innate immune response of the host by suppressing IFN-beta synthesis, which it achieves by interfering with the RIG-I/IFIH1 pathway. The sequence is that of Genome polyprotein from Cercopithecus hamlyni (Owl-faced monkey).